A 748-amino-acid polypeptide reads, in one-letter code: Rho GTPase-activating protein 24 (748 aa).

The interval 1–20 (MEENNDSTENPQQGQGRQNA) is disordered. Polar residues predominate over residues 7–18 (STENPQQGQGRQ). Residues 19-125 (NAIKCGWLRK…WVKSIRRVIW (107 aa)) form the PH domain. Residues 135 to 329 (QKLEDTVRYE…VMISKHDCLF (195 aa)) form the Rho-GAP domain. 2 disordered regions span residues 354 to 476 (TMGQ…GTHS) and 582 to 641 (DFFG…SSNH). Composition is skewed to polar residues over residues 356–374 (GQLQ…SRQC) and 382–405 (PQRS…SPKN). Phosphoserine occurs at positions 369, 391, 396, 398, 402, 413, 415, and 437. A compositionally biased stretch (polar residues) spans 432–476 (IVTNGSFSSSNAEGLEKTQTTPNGSLQARRSSSLKVSGTKMGTHS). Thr-452 is subject to Phosphothreonine. The span at 600–615 (DLSHPRDYESKSDHRS) shows a compositional bias: basic and acidic residues. Residues 617–641 (GGRSSRATSSSDNSETFVGNSSSNH) are compositionally biased toward low complexity. A coiled-coil region spans residues 649–729 (SSLKQEMTKQ…KEMEQFFSTF (81 aa)).

In terms of assembly, interacts with FLNA. Phosphorylated by ROCK, leading to activate the RacGAP activity. In terms of tissue distribution, isoform 1 is widely expressed with a higher level in kidney. Isoform 2 is mainly expressed in endothelial cells.

It is found in the cytoplasm. The protein localises to the cytoskeleton. Its subcellular location is the cell junction. The protein resides in the adherens junction. It localises to the focal adhesion. It is found in the cell projection. In terms of biological role, rho GTPase-activating protein involved in cell polarity, cell morphology and cytoskeletal organization. Acts as a GTPase activator for the Rac-type GTPase by converting it to an inactive GDP-bound state. Controls actin remodeling by inactivating Rac downstream of Rho leading to suppress leading edge protrusion and promotes cell retraction to achieve cellular polarity. Able to suppress RAC1 and CDC42 activity in vitro. Overexpression induces cell rounding with partial or complete disruption of actin stress fibers and formation of membrane ruffles, lamellipodia, and filopodia. Isoform 2 is a vascular cell-specific GAP involved in modulation of angiogenesis. This is Rho GTPase-activating protein 24 (ARHGAP24) from Homo sapiens (Human).